Consider the following 1321-residue polypeptide: C-Jun-amino-terminal kinase-interacting protein 4 (1321 aa).

M1 carries the post-translational modification N-acetylmethionine. The RH1 domain maps to 7–95; the sequence is VVYQEEPGGS…ITQYEREKAL (89 aa). Positions 66-166 form a coiled coil; that stretch reads AQDQEHQVEL…NALHQRHTEM (101 aa). Phosphoserine occurs at positions 109, 183, 185, 194, and 203. A disordered region spans residues 203–292; it reads SLGIFPLPAG…SDVATIPTDT (90 aa). Phosphothreonine is present on T217. The segment covering 236–253 has biased composition (polar residues); that stretch reads ELSQPRSHTSLKVSNSPE. 5 positions are modified to phosphoserine: S238, S251, S265, S268, and S272. Over residues 266 to 285 the composition is skewed to polar residues; that stretch reads DVSQGGSKATTPASTANSDV. T292 is subject to Phosphothreonine. Phosphoserine is present on residues S311, S329, S332, and S347. Phosphothreonine is present on residues T348, T365, and T418. The stretch at 408–534 forms a coiled coil; it reads REVENLILEN…LQEAVRWTEM (127 aa). The segment covering 473 to 489 has biased composition (basic and acidic residues); the sequence is LRKARAEAEDARQKAKD. 2 disordered regions span residues 473–500 and 563–600; these read LRKA…TAQR and SSNT…SQLP. One can recognise an RH2 domain in the interval 500–571; it reads RKRFTRVEMA…SSSNTTKKPE (72 aa). T586 is modified (phosphothreonine). S588 carries the post-translational modification Phosphoserine. T595 bears the Phosphothreonine mark. Phosphoserine is present on residues S705, S728, S730, S732, and S733. Residues 724-758 are a coiled coil; sequence SKQRSASQSSLDKLDQELKEQQKELKNQEELSSLV. The tract at residues 854-906 is disordered; it reads GAATSPSTNGASPVMDKPPEMEAENSEVDENVPTAEEATEATEGNAGSAEDTV. The span at 855–864 shows a compositional bias: polar residues; it reads AATSPSTNGA. Positions 874–883 are enriched in acidic residues; that stretch reads MEAENSEVDE. Low complexity predominate over residues 894–903; that stretch reads ATEGNAGSAE. Residue S1188 is modified to Phosphoserine. The tract at residues 1239 to 1266 is disordered; that stretch reads PQSSSSGTDLTGDKAGPSAQEPGSQTPL. Residue T1264 is modified to Phosphothreonine.

This sequence belongs to the JIP scaffold family. Homodimer. The homodimer interacts with ARF6, forming a heterotetramer. Homooligomer. Interacts with MAX, MAPK14, MAP3K3, MYC, KNS2 and MAP2K4. Interaction with KNS2 is important in the formation of ternary complex with MAPK8. Interacts with NFKB1. Interacts with PIP4P1. Interacts with PIKFYVE. As to quaternary structure, interacts with MAPK8, MAPK9, MAPK10. Phosphorylated by MAPK8 and MAPK14. As to expression, expressed only in testis on the round spermatids of stage I, II and II. Absent in spermatogonia and spermatocyte. Expressed in testis and in acute myeloid leukemia (AML) patients. In terms of tissue distribution, expressed in testis.

The protein resides in the cytoplasm. It localises to the perinuclear region. Its subcellular location is the lysosome membrane. It is found in the cytoplasmic vesicle. The protein localises to the secretory vesicle. The protein resides in the acrosome. Its activity is regulated as follows. May play a role in spermatozoa-egg-interaction. Its function is as follows. The JNK-interacting protein (JIP) group of scaffold proteins selectively mediates JNK signaling by aggregating specific components of the MAPK cascade to form a functional JNK signaling module. Regulates lysosomal positioning by acting as an adapter protein which links PIP4P1-positive lysosomes to the dynein-dynactin complex. Assists PIKFYVE selective functionality in microtubule-based endosome-to-TGN trafficking. This Homo sapiens (Human) protein is C-Jun-amino-terminal kinase-interacting protein 4.